Here is a 727-residue protein sequence, read N- to C-terminus: Putative inactive disease susceptibility protein LOV1 (727 aa).

One can recognise an NB-ARC domain in the interval 44 to 336; sequence EQSVEALAGH…AAEGIITSSD (293 aa). LRR repeat units follow at residues 459–484, 485–507, 509–530, 575–600, and 601–626; these read LPLL…IGDL, IHLR…LRNL, LLLY…LKEM, MTKL…LGQL, and RSLE…IVLN.

The protein belongs to the disease resistance NB-LRR family. RPP8/HRT subfamily.

The protein is Putative inactive disease susceptibility protein LOV1 (LOV1) of Arabidopsis thaliana (Mouse-ear cress).